Here is a 193-residue protein sequence, read N- to C-terminus: ECF RNA polymerase sigma factor SigK (193 aa).

Residues L35 to E101 are sigma-70 factor domain-2. Positions E59 to Q62 match the Polymerase core binding motif. Residues M140–K187 form a sigma-70 factor domain-4 region. A DNA-binding region (H-T-H motif) is located at residues Y161–R180.

This sequence belongs to the sigma-70 factor family. ECF subfamily. Interacts transiently with the RNA polymerase catalytic core formed by RpoA, RpoB, RpoC and RpoZ (2 alpha, 1 beta, 1 beta' and 1 omega subunit) to form the RNA polymerase holoenzyme that can initiate transcription. Interacts (via sigma-70 factor domain 4) with anti-sigma-K factor RskA.

Sigma factors are initiation factors that promote the attachment of RNA polymerase to specific initiation sites and are then released. Extracytoplasmic function (ECF) sigma factors are held in an inactive form by an anti-sigma factor until released by regulated intramembrane proteolysis. This chain is ECF RNA polymerase sigma factor SigK (sigK), found in Mycobacterium sp. (strain JLS).